We begin with the raw amino-acid sequence, 334 residues long: GTPase Obg (334 aa).

Residues 1 to 159 form the Obg domain; it reads MRFVDEVVIK…KEVRLELNLL (159 aa). The region spanning 160–331 is the OBG-type G domain; it reads ADIALLGLPN…LAKKLNEFLH (172 aa). Residues 166-173, 191-195, 212-215, 282-285, and 312-314 contribute to the GTP site; these read GLPNAGKS, FTTMY, DIPG, NKID, and SAA. 2 residues coordinate Mg(2+): serine 173 and threonine 193.

The protein belongs to the TRAFAC class OBG-HflX-like GTPase superfamily. OBG GTPase family. In terms of assembly, monomer. Requires Mg(2+) as cofactor.

Its subcellular location is the cytoplasm. Functionally, an essential GTPase which binds GTP, GDP and possibly (p)ppGpp with moderate affinity, with high nucleotide exchange rates and a fairly low GTP hydrolysis rate. Plays a role in control of the cell cycle, stress response, ribosome biogenesis and in those bacteria that undergo differentiation, in morphogenesis control. This Francisella philomiragia subsp. philomiragia (strain ATCC 25017 / CCUG 19701 / FSC 153 / O#319-036) protein is GTPase Obg.